We begin with the raw amino-acid sequence, 1682 residues long: 1-phosphatidylinositol 4,5-bisphosphate phosphodiesterase eta-1 (1682 aa).

The region spanning 20 to 128 (SVMQSGTQMI…WITGLKYLMA (109 aa)) is the PH domain. EF-hand domains are found at residues 142–177 (THDQWVKQTFEEADKNGDGLLNIEEIHQLMHKLNVN), 178–214 (LPRRKVRQMFQEADTDENQGTLTFEEFCVFYKMMSLR), and 226–246 (DKKDHLTVEELAQFLKVEQKM). Residues Asp-155, Asn-157, Asp-159, and Glu-166 each contribute to the Ca(2+) site. The PI-PLC X-box domain occupies 299-444 (QDMDQPLCNY…LKGKILVKGK (146 aa)). The active site involves His-314. Residues Asn-315, Glu-344, and Asp-346 each coordinate Ca(2+). Residue His-358 is part of the active site. A Ca(2+)-binding site is contributed by Glu-393. 2 residues coordinate substrate: Lys-442 and Lys-444. The segment at 534 to 588 (LDVKESGKKSHGRSLMANFGKHKQKATKSRSKSYSTDDEDDSLQNPGKEGGQLYR) is disordered. Over residues 553-564 (GKHKQKATKSRS) the composition is skewed to basic residues. The 114-residue stretch at 602-715 (LSDLVVYTNS…GYILKPQQMC (114 aa)) folds into the PI-PLC Y-box domain. The substrate site is built by Ser-628 and Arg-655. Positions 716–844 (KGTFNPFSGD…PGYRHVYLEG (129 aa)) constitute a C2 domain. Ca(2+) is bound by residues Ile-759, Asp-761, Asp-785, Asp-814, His-815, and Asp-816. A compositionally biased stretch (basic and acidic residues) spans 992 to 1018 (DTDGKENCLAGDKDDRRKGAATRKDPH). 3 disordered regions span residues 992–1083 (DTDG…LSPR), 1296–1321 (NLPGFPDASPGQFPKSPTHGEDHSQV), and 1581–1603 (RAKEKQEAGKQKAMAQSTRGGVV). Low complexity predominate over residues 1019–1033 (FSNFNKKLSSSSSAL). Composition is skewed to polar residues over residues 1040–1050 (QGPTASVSNPE) and 1065–1074 (NMTNDCQENH). Basic and acidic residues predominate over residues 1581 to 1590 (RAKEKQEAGK).

The cofactor is Ca(2+). As to expression, expressed in brain and to a lower extent in lung. In brain, it is found in cerebrum, cerebellum and spinal cord.

The protein resides in the cytoplasm. It is found in the membrane. It catalyses the reaction a 1,2-diacyl-sn-glycero-3-phospho-(1D-myo-inositol-4,5-bisphosphate) + H2O = 1D-myo-inositol 1,4,5-trisphosphate + a 1,2-diacyl-sn-glycerol + H(+). Its function is as follows. The production of the second messenger molecules diacylglycerol (DAG) and inositol 1,4,5-trisphosphate (IP3) is mediated by calcium-activated phosphatidylinositol-specific phospholipase C enzymes. This is 1-phosphatidylinositol 4,5-bisphosphate phosphodiesterase eta-1 from Mus musculus (Mouse).